A 183-amino-acid chain; its full sequence is uncharacterized protein (183 aa).

The protein belongs to the Bcl-2 family.

This is an uncharacterized protein from Equine herpesvirus 2 (strain 86/87) (EHV-2).